The following is a 438-amino-acid chain: Enolase (438 aa).

Gln174 lines the (2R)-2-phosphoglycerate pocket. The Proton donor role is filled by Glu216. Mg(2+) contacts are provided by Asp253, Glu297, and Asp324. (2R)-2-phosphoglycerate is bound by residues Lys349, Arg378, Ser379, and Lys400. Lys349 functions as the Proton acceptor in the catalytic mechanism.

This sequence belongs to the enolase family. In terms of assembly, component of the RNA degradosome, a multiprotein complex involved in RNA processing and mRNA degradation. Mg(2+) serves as cofactor.

It localises to the cytoplasm. It is found in the secreted. Its subcellular location is the cell surface. It catalyses the reaction (2R)-2-phosphoglycerate = phosphoenolpyruvate + H2O. Its pathway is carbohydrate degradation; glycolysis; pyruvate from D-glyceraldehyde 3-phosphate: step 4/5. Catalyzes the reversible conversion of 2-phosphoglycerate (2-PG) into phosphoenolpyruvate (PEP). It is essential for the degradation of carbohydrates via glycolysis. The chain is Enolase from Psychrobacter arcticus (strain DSM 17307 / VKM B-2377 / 273-4).